Here is a 287-residue protein sequence, read N- to C-terminus: Efem/EfeO family lipoprotein (287 aa).

An N-terminal signal peptide occupies residues 1-17 (MKKLPTILLASSLLLAA). Cysteine 18 carries the N-palmitoyl cysteine lipid modification. Cysteine 18 carries S-diacylglycerol cysteine lipidation. A disordered region spans residues 20–50 (NNSHSDDNSNKDKQSQSSKGENKASLQKATK). The segment covering 23–33 (HSDDNSNKDKQ) has biased composition (basic and acidic residues).

Belongs to the EfeM/EfeO family.

It localises to the cell membrane. This is Efem/EfeO family lipoprotein from Staphylococcus haemolyticus (strain JCSC1435).